A 334-amino-acid chain; its full sequence is D-alanine--D-alanine ligase (334 aa).

An ATP-grasp domain is found at 110-306 (KHVLKSLGID…FDHVVDLIVQ (197 aa)). 138 to 190 (LPYPFVIKPVRGGSTIGVHAIFSKSEYLDLSAHADTLEDRMIVEEYVSGQEVQ) provides a ligand contact to ATP. Positions 258, 272, and 274 each coordinate Mg(2+).

This sequence belongs to the D-alanine--D-alanine ligase family. Mg(2+) serves as cofactor. Mn(2+) is required as a cofactor.

It is found in the cytoplasm. The catalysed reaction is 2 D-alanine + ATP = D-alanyl-D-alanine + ADP + phosphate + H(+). Its pathway is cell wall biogenesis; peptidoglycan biosynthesis. Cell wall formation. The polypeptide is D-alanine--D-alanine ligase (Anaplasma marginale (strain Florida)).